Reading from the N-terminus, the 233-residue chain is Phosphoribosylformylglycinamidine synthase subunit PurQ (233 aa).

The Glutamine amidotransferase type-1 domain occupies S3–A233. C87 acts as the Nucleophile in catalysis. Residues H204 and E206 contribute to the active site.

As to quaternary structure, part of the FGAM synthase complex composed of 1 PurL, 1 PurQ and 2 PurS subunits.

It localises to the cytoplasm. The catalysed reaction is N(2)-formyl-N(1)-(5-phospho-beta-D-ribosyl)glycinamide + L-glutamine + ATP + H2O = 2-formamido-N(1)-(5-O-phospho-beta-D-ribosyl)acetamidine + L-glutamate + ADP + phosphate + H(+). The enzyme catalyses L-glutamine + H2O = L-glutamate + NH4(+). The protein operates within purine metabolism; IMP biosynthesis via de novo pathway; 5-amino-1-(5-phospho-D-ribosyl)imidazole from N(2)-formyl-N(1)-(5-phospho-D-ribosyl)glycinamide: step 1/2. In terms of biological role, part of the phosphoribosylformylglycinamidine synthase complex involved in the purines biosynthetic pathway. Catalyzes the ATP-dependent conversion of formylglycinamide ribonucleotide (FGAR) and glutamine to yield formylglycinamidine ribonucleotide (FGAM) and glutamate. The FGAM synthase complex is composed of three subunits. PurQ produces an ammonia molecule by converting glutamine to glutamate. PurL transfers the ammonia molecule to FGAR to form FGAM in an ATP-dependent manner. PurS interacts with PurQ and PurL and is thought to assist in the transfer of the ammonia molecule from PurQ to PurL. The sequence is that of Phosphoribosylformylglycinamidine synthase subunit PurQ from Rhodopseudomonas palustris (strain HaA2).